The following is a 757-amino-acid chain: MMWPQPPTFSLFLLLLLSQAPSSRPQSSGTKKLRLVGPTDRPEEGRLEVLHQGQWGTVCDDDFALQEATVACRQLGFESALTWAHSAKYGQGEGPIWLDNVRCLGTEKTLDQCGSNGWGVSDCRHSEDVGVVCHPRRQHGYHSEKVSNALGPQGRRLEEVRLKPILASAKRHSPVTEGAVEVRYDGHWRQVCDQGWTMNNSRVVCGMLGFPSQTSVNSHYYRKVWNLKMKDPKSRLNSLTKKNSFWIHRVDCLGTEPHLAKCQVQVAPGRGKLRPACPGGMHAVVSCVAGPHFRRQKPKPTRKESHAEELKVRLRSGAQVGEGRVEVLMNRQWGTVCDHRWNLISASVVCRQLGFGSAREALFGAQLGQGLGPIHLSEVRCRGYERTLGDCLALEGSQNGCQHANDAAVRCNIPDMGFQNKVRLAGGRNSEEGVVEVQVEVNGVPRWGTVCSDHWGLTEAMVTCRQLGLGFANFALKDTWYWQGTPEAKEVVMSGVRCSGTEMALQQCQRHGPVHCSHGPGRFSAGVACMNSAPDLVMNAQLVQETAYLEDRPLSMLYCAHEENCLSKSADHMDWPYGYRRLLRFSSQIYNLGRADFRPKAGRHSWIWHQCHRHYHSIEVFTHYDLLTLNGSKVAEGHKASFCLEDTNCPSGVQRRYACANFGEQGVAVGCWDTYRHDIDCQWVDITDVGPGDYIFQVVVNPTNDVAESDFSNNMIRCRCKYDGQRVWLHNCHTGDSYRANAELSLEQEQRLRNNLI.

The signal sequence occupies residues Met1–Pro25. SRCR domains follow at residues Leu33–His134, Val160–Val288, Val312–Asn412, and Val422–Met530. Disulfide bonds link Cys59-Cys123, Cys72-Cys133, Cys103-Cys113, Cys192-Cys277, Cys205-Cys287, Cys252-Cys262, Cys337-Cys401, Cys350-Cys411, Cys381-Cys391, Cys451-Cys516, Cys464-Cys529, Cys498-Cys508, Cys559-Cys565, Cys611-Cys659, Cys643-Cys649, Cys671-Cys681, and Cys718-Cys732. Asn199 carries N-linked (GlcNAc...) asparagine glycosylation. The lysyl-oxidase like stretch occupies residues Pro534 to Ser737. Residues His612, His614, and His616 each contribute to the Cu cation site. Asn630 is a glycosylation site (N-linked (GlcNAc...) asparagine). Positions Lys639–Tyr675 form a cross-link, lysine tyrosylquinone (Lys-Tyr). A 2',4',5'-topaquinone modification is found at Tyr675.

This sequence belongs to the lysyl oxidase family. It depends on Cu cation as a cofactor. Lysine tyrosylquinone residue is required as a cofactor. The lysine tyrosylquinone cross-link (LTQ) is generated by condensation of the epsilon-amino group of a lysine with a topaquinone produced by oxidation of tyrosine. Post-translationally, may be proteolytically cleaved by BMP1.

The protein resides in the secreted. The protein localises to the extracellular space. The enzyme catalyses L-lysyl-[protein] + O2 + H2O = (S)-2-amino-6-oxohexanoyl-[protein] + H2O2 + NH4(+). Its function is as follows. Catalyzes the oxidative deamination of lysine and hydroxylysine residues in collagen and elastin, resulting in the formation of covalent cross-linkages, and the stabilization of collagen and elastin fibers. The chain is Lysyl oxidase homolog 4 (Loxl4) from Mus musculus (Mouse).